The sequence spans 491 residues: Glutamate--tRNA ligase (491 aa).

The 'HIGH' region motif lies at 13–23 (PSPTGFLHIGN). C110, C112, C137, and H139 together coordinate Zn(2+). The 'KMSKS' region motif lies at 254–258 (KLSKR). Residue K257 participates in ATP binding.

Belongs to the class-I aminoacyl-tRNA synthetase family. Glutamate--tRNA ligase type 1 subfamily. As to quaternary structure, monomer. The cofactor is Zn(2+).

The protein resides in the cytoplasm. The catalysed reaction is tRNA(Glu) + L-glutamate + ATP = L-glutamyl-tRNA(Glu) + AMP + diphosphate. Functionally, catalyzes the attachment of glutamate to tRNA(Glu) in a two-step reaction: glutamate is first activated by ATP to form Glu-AMP and then transferred to the acceptor end of tRNA(Glu). The chain is Glutamate--tRNA ligase from Listeria monocytogenes serotype 4b (strain F2365).